Consider the following 1066-residue polypeptide: Thyrotropin-releasing hormone-degrading ectoenzyme (1066 aa).

The span at 1 to 14 (MALDGERGEQEEEK) shows a compositional bias: basic and acidic residues. Residues 1–43 (MALDGERGEQEEEKKKKKKKKKRKKKEEEGAEKSSSPFAATMG) form a disordered region. Topologically, residues 1 to 81 (MALDGERGEQ…ERHIAVHKRL (81 aa)) are cytoplasmic. Positions 15 to 25 (KKKKKKKKRKK) are enriched in basic residues. Threonine 71 bears the Phosphothreonine; by PKC mark. A helical; Signal-anchor for type II membrane protein transmembrane segment spans residues 82–102 (VLAFAVSIVALLAVTMLAVLL). The Extracellular segment spans residues 103-1066 (SLRFDECGAS…FQWLGKAMRH (964 aa)). Positions 117–177 (GTDGGLGGFP…SEEEQEQWQP (61 aa)) are disordered. The segment covering 118–127 (TDGGLGGFPE) has biased composition (gly residues). Residue asparagine 131 is glycosylated (N-linked (GlcNAc...) asparagine). Residues 143–154 (HAGEESSQREIG) show a composition bias toward basic and acidic residues. 4 N-linked (GlcNAc...) asparagine glycosylation sites follow: asparagine 202, asparagine 217, asparagine 264, and asparagine 380. 446 to 450 (AAMEN) is a binding site for substrate. Histidine 482 contacts Zn(2+). Residue glutamate 483 is the Proton acceptor of the active site. Zn(2+) is bound by residues histidine 486 and glutamate 505. Asparagine 647, asparagine 676, asparagine 691, asparagine 705, asparagine 726, asparagine 842, and asparagine 948 each carry an N-linked (GlcNAc...) asparagine glycan.

The protein belongs to the peptidase M1 family. Homodimer; disulfide-linked. It depends on Zn(2+) as a cofactor. In terms of tissue distribution, predominantly expressed in brain and pituitary. Lower levels in lung and liver.

Its subcellular location is the membrane. The enzyme catalyses Release of the N-terminal pyroglutamyl group from pGlu-|-His-Xaa tripeptides and pGlu-|-His-Xaa-Gly tetrapeptides.. In terms of biological role, specific inactivation of TRH after its release. The chain is Thyrotropin-releasing hormone-degrading ectoenzyme (Trhde) from Rattus norvegicus (Rat).